The following is a 132-amino-acid chain: UPF0299 membrane protein YohJ (132 aa).

Transmembrane regions (helical) follow at residues 7 to 27 (IIWQYLRAFVLIYACLYAGIF), 31 to 51 (LLPVTIPGSIIGMLILFVLLA), 63 to 83 (GCYVLIRYMALLFVPIGVGVM), and 93 to 113 (FGPVVVSCAVSTLVVFLVVSW).

It belongs to the UPF0299 family.

The protein localises to the cell inner membrane. The protein is UPF0299 membrane protein YohJ of Shigella boydii serotype 4 (strain Sb227).